A 130-amino-acid polypeptide reads, in one-letter code: Protein ApaG (130 aa).

One can recognise an ApaG domain in the interval 3 to 127; sequence RAVTRGIEVS…FSLDIPEQRR (125 aa).

This Brucella anthropi (strain ATCC 49188 / DSM 6882 / CCUG 24695 / JCM 21032 / LMG 3331 / NBRC 15819 / NCTC 12168 / Alc 37) (Ochrobactrum anthropi) protein is Protein ApaG.